A 487-amino-acid polypeptide reads, in one-letter code: WAS/WASL-interacting protein family member 1 (487 aa).

A compositionally biased stretch (pro residues) spans 1-14; it reads MPVPPPPAPPPPPT. A disordered region spans residues 1-487; that stretch reads MPVPPPPAPP…GAPPLPPIPR (487 aa). Polar residues predominate over residues 21 to 31; it reads EKPSLNKTEQA. In terms of domain architecture, WH2 spans 32–49; it reads GRNALLSDISKGKKLKKT. R33 bears the Asymmetric dimethylarginine mark. The segment at 45–48 is binds actin; it reads KLKK. Residues 64 to 100 show a composition bias toward gly residues; the sequence is GAGGGYGGGSGGGGGGGSSGGGGNFGGGGPPGLGGLF. Omega-N-methylarginine is present on residues R121 and R130. A compositionally biased stretch (low complexity) spans 136–147; sequence PFSSPSGPGRFP. A Phosphoserine modification is found at S138. Composition is skewed to pro residues over residues 157-170 and 178-190; these read PPEP…PPRP and SLPP…PRPI. S222 is subject to Phosphoserine. Pro residues-rich tracts occupy residues 234-243, 269-285, and 293-309; these read FPRPPLPPTP, VPPP…PSTP, and APPP…PLPP. The residue at position 324 (S324) is a Phosphoserine. The span at 328–355 shows a compositional bias: pro residues; it reads PTPPLPSPGRSGPLPPPPTERPPPPVRD. T329 carries the phosphothreonine modification. S334 carries the phosphoserine modification. XRSGPXPPXP motif repeat units follow at residues 336–345, 358–367, and 394–403; these read GRSGPLPPPP and PRSGPRPPLP. Residues 397–418 are compositionally biased toward pro residues; the sequence is GPRPPLPPDRPGAGAPPPPPPS. Over residues 419-428 the composition is skewed to polar residues; the sequence is TSVRNGFQDS. The span at 464-478 shows a compositional bias: basic and acidic residues; that stretch reads ARSESRSGSNRRERG.

It belongs to the verprolin family. As to quaternary structure, binds to WAS within the N-terminal region, at a site distinct from the CDC42-binding site. Binds profilin and actin. Interacts with DBNL. Binds to WASL. Interacts with DBNL. Interacts with FNBP1L (via the SH3 domain). Isoforms were differentially expressed. One isoform was ubiquitously expressed, another was muscle-specific and another was expressed in the liver, heart and testis.

It is found in the cytoplasmic vesicle. The protein resides in the cytoplasm. It localises to the cytoskeleton. Its subcellular location is the cell projection. The protein localises to the ruffle. In terms of biological role, plays a role in the reorganization of the actin cytoskeleton. Contributes with NCK1 and GRB2 in the recruitment and activation of WASL. Plays a role in the formation of cell ruffles. May participate in regulating the subcellular localization of WASL, resulting in the disassembly of stress fibers in favor of filopodia formation. This Rattus norvegicus (Rat) protein is WAS/WASL-interacting protein family member 1 (Wipf1).